The primary structure comprises 281 residues: Putative dehydrogenase/reductase SDR family member 4-like 1 (281 aa).

Residue 36 to 60 (LVTASTDWIGFAVAQRLAQDGAHVV) participates in NADP(+) binding. Ser172 is a binding site for substrate. Tyr185 (proton acceptor) is an active-site residue. Lys189 is an NADP(+) binding site. The short motif at 279-281 (SRL) is the Peroxisomal targeting signal element.

This sequence belongs to the short-chain dehydrogenases/reductases (SDR) family.

Its function is as follows. Putative oxidoreductase. The protein is Putative dehydrogenase/reductase SDR family member 4-like 1 of Homo sapiens (Human).